A 400-amino-acid polypeptide reads, in one-letter code: Na(+)/H(+) antiporter NhaA (400 aa).

11 helical membrane passes run 26 to 46 (AGGILLLFSAVVAMLLANSPL), 71 to 91 (LIHWINDGFMAVFFVLVGMEV), 107 to 127 (IFPAIAAIGGMVIPAVVYWFI), 137 to 157 (GWAIPMATDIAFALGIMALLS), 166 to 186 (IFLLALAIIDDLGAIVVIALF), 189 to 209 (HGLSVQALIFSAVAIIVLILL), 225 to 245 (AILWASVLKSGVHATLAGVII), 273 to 293 (FVILPLFAFANAGVSFAGIDV), 299 to 319 (PLLLAIASGLIIGKPVGIFGF), 340 to 360 (IFAVAVLCGIGFTMSMFLASL), and 373 to 393 (LSRLGILLGSTVSAILGYLFL).

It belongs to the NhaA Na(+)/H(+) (TC 2.A.33) antiporter family.

It is found in the cell inner membrane. It carries out the reaction Na(+)(in) + 2 H(+)(out) = Na(+)(out) + 2 H(+)(in). Functionally, na(+)/H(+) antiporter that extrudes sodium in exchange for external protons. This is Na(+)/H(+) antiporter NhaA from Haemophilus influenzae (strain ATCC 51907 / DSM 11121 / KW20 / Rd).